A 290-amino-acid polypeptide reads, in one-letter code: Formamidopyrimidine-DNA glycosylase (290 aa).

Catalysis depends on Pro2, which acts as the Schiff-base intermediate with DNA. The active-site Proton donor is Glu3. Residue Lys58 is the Proton donor; for beta-elimination activity of the active site. DNA contacts are provided by His98, Arg126, and Arg171. Residues 256-290 (FVYDRAGLPCRVCATPVRQIVQGQRSTFYCPKCQH) form an FPG-type zinc finger. Arg280 acts as the Proton donor; for delta-elimination activity in catalysis.

The protein belongs to the FPG family. As to quaternary structure, monomer. Requires Zn(2+) as cofactor.

It carries out the reaction Hydrolysis of DNA containing ring-opened 7-methylguanine residues, releasing 2,6-diamino-4-hydroxy-5-(N-methyl)formamidopyrimidine.. The enzyme catalyses 2'-deoxyribonucleotide-(2'-deoxyribose 5'-phosphate)-2'-deoxyribonucleotide-DNA = a 3'-end 2'-deoxyribonucleotide-(2,3-dehydro-2,3-deoxyribose 5'-phosphate)-DNA + a 5'-end 5'-phospho-2'-deoxyribonucleoside-DNA + H(+). Its function is as follows. Involved in base excision repair of DNA damaged by oxidation or by mutagenic agents. Acts as a DNA glycosylase that recognizes and removes damaged bases. Has a preference for oxidized purines, such as 7,8-dihydro-8-oxoguanine (8-oxoG). Has AP (apurinic/apyrimidinic) lyase activity and introduces nicks in the DNA strand. Cleaves the DNA backbone by beta-delta elimination to generate a single-strand break at the site of the removed base with both 3'- and 5'-phosphates. This chain is Formamidopyrimidine-DNA glycosylase, found in Cupriavidus taiwanensis (strain DSM 17343 / BCRC 17206 / CCUG 44338 / CIP 107171 / LMG 19424 / R1) (Ralstonia taiwanensis (strain LMG 19424)).